Here is a 103-residue protein sequence, read N- to C-terminus: Large ribosomal subunit protein bL21 (103 aa).

The protein belongs to the bacterial ribosomal protein bL21 family. As to quaternary structure, part of the 50S ribosomal subunit. Contacts protein L20.

Its function is as follows. This protein binds to 23S rRNA in the presence of protein L20. In Nautilia profundicola (strain ATCC BAA-1463 / DSM 18972 / AmH), this protein is Large ribosomal subunit protein bL21.